We begin with the raw amino-acid sequence, 324 residues long: Protein ChrB (324 aa).

Its function is as follows. Together with ChrA1, this protein reduces chromate accumulation and is essential for chromate resistance, possibly as a regulatory protein. The polypeptide is Protein ChrB (Cupriavidus metallidurans (strain ATCC 43123 / DSM 2839 / NBRC 102507 / CH34) (Ralstonia metallidurans)).